Reading from the N-terminus, the 291-residue chain is MKISITAPAKINLSLDALYKREDGYHEVEMVMTTIDLADRLSLERLDEDKIVLDVKAHFIPEDRRNLIYQAALLLKKRFNVKMGVRIIIDKHIPVSAGLAGGSSDAAAALKGLNIIWELGLSIEELAEISSEIGSDIAFCVYGGTALATGRGEKITALPNIPGCWIVLAKPSISVSTPTIYKELQVENVEHPNTKKMIESIKIGDLDGIFASTGNVLESVTLEKNPQVKRIKDRMMAFGAEAALMSGSGPTVFALIKQYSRAKRVYNGLRGFCEEVYMVRPWSESENETIN.

Residue lysine 10 is part of the active site. 94-104 (PVSAGLAGGSS) is an ATP binding site. Residue aspartate 136 is part of the active site.

The protein belongs to the GHMP kinase family. IspE subfamily.

It catalyses the reaction 4-CDP-2-C-methyl-D-erythritol + ATP = 4-CDP-2-C-methyl-D-erythritol 2-phosphate + ADP + H(+). Its pathway is isoprenoid biosynthesis; isopentenyl diphosphate biosynthesis via DXP pathway; isopentenyl diphosphate from 1-deoxy-D-xylulose 5-phosphate: step 3/6. Catalyzes the phosphorylation of the position 2 hydroxy group of 4-diphosphocytidyl-2C-methyl-D-erythritol. This chain is 4-diphosphocytidyl-2-C-methyl-D-erythritol kinase, found in Listeria welshimeri serovar 6b (strain ATCC 35897 / DSM 20650 / CCUG 15529 / CIP 8149 / NCTC 11857 / SLCC 5334 / V8).